Reading from the N-terminus, the 254-residue chain is Type III pantothenate kinase (254 aa).

22-29 (VLGNTHVR) contributes to the ATP binding site. Residues Tyr89 and 93–96 (GLDR) contribute to the substrate site. The active-site Proton acceptor is the Asp95. Position 115 (Asp115) interacts with K(+). Residue Thr118 participates in ATP binding. Thr173 serves as a coordination point for substrate.

The protein belongs to the type III pantothenate kinase family. Homodimer. The cofactor is NH4(+). Requires K(+) as cofactor.

It is found in the cytoplasm. It catalyses the reaction (R)-pantothenate + ATP = (R)-4'-phosphopantothenate + ADP + H(+). It participates in cofactor biosynthesis; coenzyme A biosynthesis; CoA from (R)-pantothenate: step 1/5. In terms of biological role, catalyzes the phosphorylation of pantothenate (Pan), the first step in CoA biosynthesis. This chain is Type III pantothenate kinase, found in Synechococcus sp. (strain JA-2-3B'a(2-13)) (Cyanobacteria bacterium Yellowstone B-Prime).